The sequence spans 122 residues: Holo-[acyl-carrier-protein] synthase (122 aa).

Mg(2+) is bound by residues Asp-8 and Glu-58.

The protein belongs to the P-Pant transferase superfamily. AcpS family. It depends on Mg(2+) as a cofactor.

It is found in the cytoplasm. The enzyme catalyses apo-[ACP] + CoA = holo-[ACP] + adenosine 3',5'-bisphosphate + H(+). Its function is as follows. Transfers the 4'-phosphopantetheine moiety from coenzyme A to a Ser of acyl-carrier-protein. This is Holo-[acyl-carrier-protein] synthase from Levilactobacillus brevis (strain ATCC 367 / BCRC 12310 / CIP 105137 / JCM 1170 / LMG 11437 / NCIMB 947 / NCTC 947) (Lactobacillus brevis).